A 350-amino-acid chain; its full sequence is Probable dual-specificity RNA methyltransferase RlmN (350 aa).

The active-site Proton acceptor is the glutamate 93. One can recognise a Radical SAM core domain in the interval 99–327 (SSKRLTVCVS…VSVRYSRGVQ (229 aa)). Cysteine 106 and cysteine 332 are joined by a disulfide. Cysteine 113, cysteine 117, and cysteine 120 together coordinate [4Fe-4S] cluster. S-adenosyl-L-methionine-binding positions include 160–161 (GE), serine 190, 213–215 (SLH), and asparagine 289. The S-methylcysteine intermediate role is filled by cysteine 332.

It belongs to the radical SAM superfamily. RlmN family. The cofactor is [4Fe-4S] cluster.

It is found in the cytoplasm. The enzyme catalyses adenosine(2503) in 23S rRNA + 2 reduced [2Fe-2S]-[ferredoxin] + 2 S-adenosyl-L-methionine = 2-methyladenosine(2503) in 23S rRNA + 5'-deoxyadenosine + L-methionine + 2 oxidized [2Fe-2S]-[ferredoxin] + S-adenosyl-L-homocysteine. The catalysed reaction is adenosine(37) in tRNA + 2 reduced [2Fe-2S]-[ferredoxin] + 2 S-adenosyl-L-methionine = 2-methyladenosine(37) in tRNA + 5'-deoxyadenosine + L-methionine + 2 oxidized [2Fe-2S]-[ferredoxin] + S-adenosyl-L-homocysteine. Functionally, specifically methylates position 2 of adenine 2503 in 23S rRNA and position 2 of adenine 37 in tRNAs. The polypeptide is Probable dual-specificity RNA methyltransferase RlmN (Synechocystis sp. (strain ATCC 27184 / PCC 6803 / Kazusa)).